We begin with the raw amino-acid sequence, 428 residues long: MTIVEDAQKGIITEEMKIVAKDEGLDPEFIRRGVAAGRIVIPTSPYRQVKICGIGEGLRTKVNASIGVSSDIVDADMEVKKAQAAEAAGADTLMELGTGGDFLAIRKKVIDSISLSVGSVPLYQAFIEAARKYGSIVDMTEDELFKATEDQAKLGTNFMAIHTGINNITMDRLKAHGRYGGLCSRGGAFMTSWMLHNEKENPLYANFDYLVEILKEHEVVLSTGNGMRAGAVHDATDRAQIQELIINSELADRAHKQGVQVIVEGPGHVPLDQIGTNVKLMKEMSGHKPFYMLGPLVTDIAPGYDHIVTAIGASVSASYGCDFLCYVTPAEHLALPNLEDVITGVKTSKIAAHVGDMVKYPDRAREQDLAMGRARRDLDWQKMYSLAIDPEHAKEVRNSRAPEDSDACTMCGNFCALKIVNQNYNLAK.

Substrate contacts are provided by residues methionine 94, tyrosine 123, histidine 162, 184–186, 225–228, and glutamate 264; these read SRG and NGMR. Histidine 268 provides a ligand contact to Zn(2+). Tyrosine 291 provides a ligand contact to substrate. Histidine 332 contacts Zn(2+). 3 residues coordinate [4Fe-4S] cluster: cysteine 408, cysteine 411, and cysteine 415.

Belongs to the ThiC family. It depends on [4Fe-4S] cluster as a cofactor.

The enzyme catalyses 5-amino-1-(5-phospho-beta-D-ribosyl)imidazole + S-adenosyl-L-methionine = 4-amino-2-methyl-5-(phosphooxymethyl)pyrimidine + CO + 5'-deoxyadenosine + formate + L-methionine + 3 H(+). The protein operates within cofactor biosynthesis; thiamine diphosphate biosynthesis. In terms of biological role, catalyzes the synthesis of the hydroxymethylpyrimidine phosphate (HMP-P) moiety of thiamine from aminoimidazole ribotide (AIR) in a radical S-adenosyl-L-methionine (SAM)-dependent reaction. This is Phosphomethylpyrimidine synthase 1 from Methanosarcina barkeri (strain Fusaro / DSM 804).